A 235-amino-acid chain; its full sequence is Exotoxin type C (235 aa).

Positions 1–27 are cleaved as a signal peptide; that stretch reads MKKINIIKIVFIITVILISTISPIIKS. Zn(2+) contacts are provided by H194, H228, and D230.

The protein belongs to the staphylococcal/streptococcal toxin family.

Its function is as follows. Superantigen that acts as a causative agent of the symptoms associated with scarlet fever. Has been associated with streptococcal toxic shock-like disease and may play a role in the early events of rheumatic fever. Superantigens cross-link major histocompatibility complex (MHC) class II and T-cell receptor (TCR) molecules, resulting in an overstimulation of T-cells associated with a massive release of pyrogenic and inflammatory cytokines. In Streptococcus pyogenes serotype M1, this protein is Exotoxin type C (speC).